Consider the following 333-residue polypeptide: Beta-ketoacyl-[acyl-carrier-protein] synthase III (333 aa).

Catalysis depends on residues C114 and H255. Residues 256–260 form an ACP-binding region; sequence QANYR. The active site involves N285.

Belongs to the thiolase-like superfamily. FabH family. In terms of assembly, homodimer.

It is found in the cytoplasm. The enzyme catalyses malonyl-[ACP] + acetyl-CoA + H(+) = 3-oxobutanoyl-[ACP] + CO2 + CoA. It participates in lipid metabolism; fatty acid biosynthesis. Catalyzes the condensation reaction of fatty acid synthesis by the addition to an acyl acceptor of two carbons from malonyl-ACP. Catalyzes the first condensation reaction which initiates fatty acid synthesis and may therefore play a role in governing the total rate of fatty acid production. Possesses both acetoacetyl-ACP synthase and acetyl transacylase activities. Its substrate specificity determines the biosynthesis of branched-chain and/or straight-chain of fatty acids. In Aliarcobacter butzleri (strain RM4018) (Arcobacter butzleri), this protein is Beta-ketoacyl-[acyl-carrier-protein] synthase III.